The primary structure comprises 247 residues: MNKALLPLLLCCFIFPASGKDAGWQWYNEKINPKEKENKPVPAAPRQEPDIMQKLAALQTATKRALYEAILYPGVDNFVKYFRLQNYWAQQAGLFTMSARKAMLAHPELDYNLQYSHYNGTVRNQLAADQAQQRQAIAKLAEHYGIMFFYRGQDPIDGQLAQVINGFRDTYGLSVIPVSVDGVINPLLPDSRTDQGQAQRLGVKYFPAMMLVDPKQGSVRPLSYGFISQDDLAKQFLNVSEDFKPNF.

The signal sequence occupies residues 1 to 19 (MNKALLPLLLCCFIFPASG).

The protein resides in the periplasm. In terms of biological role, involved in F pilus assembly. The protein is Protein TraF (traF) of Escherichia coli (strain K12).